The primary structure comprises 398 residues: MLSVTIVLVGLEMARSKVSKRDSKILDILFATTELYLKTGQPVGSKTLKESFCSDLSTATIRNYFAELEAEGFLKKNHTSGGRIPTDLALRHYVDHQEECPEAEISAPIFDKISQLPSESRNIIKDLQKATELLGEILDLPTFFSSPRFENDSVTNIQITQVDKQRAVTILSTEFGQIFTDTLWLPEACDTLSIKRIEKFLQNYIRKLPTNEELSKKEEHLSMSLYNEVVVRYLTRYCNFSEEDLYQTGMSKLLKYEAFKDPEVLALGLSLFENRRQMCELLNIGMHKGRATAFIGKELSDILGTSNPGCSVITIPYYMNRSPLGALGILGPINLPYKEALPLLKLFANKINETLTQSFYKFKLSFRRPLTSNCKLSNEPILRTEYSSIKLLPSKETL.

Belongs to the HrcA family.

In terms of biological role, negative regulator of class I heat shock genes (grpE-dnaK-dnaJ and groELS operons). Prevents heat-shock induction of these operons. This chain is Heat-inducible transcription repressor HrcA, found in Chlamydia pneumoniae (Chlamydophila pneumoniae).